Reading from the N-terminus, the 338-residue chain is Phosphatidate cytidylyltransferase, mitochondrial (338 aa).

It belongs to the TAM41 family. It depends on Mg(2+) as a cofactor.

The protein localises to the mitochondrion inner membrane. The enzyme catalyses a 1,2-diacyl-sn-glycero-3-phosphate + CTP + H(+) = a CDP-1,2-diacyl-sn-glycerol + diphosphate. It functions in the pathway phospholipid metabolism; CDP-diacylglycerol biosynthesis; CDP-diacylglycerol from sn-glycerol 3-phosphate: step 3/3. Its function is as follows. Catalyzes the conversion of phosphatidic acid (PA) to CDP-diacylglycerol (CDP-DAG), an essential intermediate in the synthesis of phosphatidylglycerol, cardiolipin and phosphatidylinositol. The chain is Phosphatidate cytidylyltransferase, mitochondrial (tamm41) from Xenopus laevis (African clawed frog).